A 174-amino-acid polypeptide reads, in one-letter code: Ribosome maturation factor RimM (174 aa).

One can recognise a PRC barrel domain in the interval 98-171 (EGEFYFHQII…TIHIEVMEGL (74 aa)).

It belongs to the RimM family. As to quaternary structure, binds ribosomal protein uS19.

It localises to the cytoplasm. An accessory protein needed during the final step in the assembly of 30S ribosomal subunit, possibly for assembly of the head region. Essential for efficient processing of 16S rRNA. May be needed both before and after RbfA during the maturation of 16S rRNA. It has affinity for free ribosomal 30S subunits but not for 70S ribosomes. This Bacillus pumilus (strain SAFR-032) protein is Ribosome maturation factor RimM.